Reading from the N-terminus, the 1771-residue chain is Kinase D-interacting substrate of 220 kDa (1771 aa).

Topologically, residues 1–499 (MSVLISQSVI…QIEPLFQFSW (499 aa)) are cytoplasmic. ANK repeat units follow at residues 4–33 (LISQ…DVDE), 37–66 (CGQT…NCNL), 70–99 (DNWT…NLEH), 103–132 (GGWT…NPSV), 136–165 (YSVY…KVNC), 169–198 (YGTT…DVDQ), 202–231 (NSMT…NVNL), 235–264 (DGNT…YVNI), 268–297 (SGDT…DIDI), 301–330 (DNKT…DTEI), 334–363 (DGET…KVSA), and 367–396 (KGDT…DGRL). The 514-residue stretch at 440–953 (YDLYSSALAD…NIVSVTGRLL (514 aa)) folds into the KAP NTPase domain. A helical transmembrane segment spans residues 500 to 520 (LIVFLTLLLCGGLGLLFAFTV). The Extracellular portion of the chain corresponds to 521 to 524 (HPNL). Residues 525 to 545 (GIAVSLSFLALLYIFFIVIYF) traverse the membrane as a helical segment. The Cytoplasmic segment spans residues 546–659 (GGRREGESWN…KWKKTCCLPS (114 aa)). A helical transmembrane segment spans residues 660–680 (FVIFLFIIGCIISGITLLAIF). Residues 681–685 (RVDPK) lie on the Extracellular side of the membrane. Residues 686-706 (HLTVNAVLISIASVVGLAFVL) form a helical membrane-spanning segment. Over 707–1771 (NCRTWWQVLD…GFGEERESIL (1065 aa)) the chain is Cytoplasmic. 2 positions are modified to phosphoserine: serine 882 and serine 885. Threonine 914 is modified (phosphothreonine). Serine 918 is modified (phosphoserine). The mediates interaction with CRKL stretch occupies residues 1089–1092 (PRAP). Serine 1163 bears the Phosphoserine mark. Disordered stretches follow at residues 1182–1202 (DAAE…PAPG), 1285–1310 (PEDP…RASH), 1344–1368 (RHSN…SQDS), and 1397–1564 (LEGG…EPIR). 6 positions are modified to phosphoserine: serine 1296, serine 1352, serine 1359, serine 1361, serine 1362, and serine 1365. Residues 1346–1358 (SNLSWQSQTRRTP) are compositionally biased toward polar residues. Over residues 1359–1368 (SLSSLNSQDS) the composition is skewed to low complexity. Positions 1403-1430 (STTISGRSSPHSTYYMGQSSSGGSIHSN) are enriched in polar residues. Residues 1431-1457 (LEQEKGKDSEPKPDDGRKSFLMKRGDV) are compositionally biased toward basic and acidic residues. Positions 1460–1470 (YSSSGVSTNDA) are enriched in polar residues. Residues serine 1521, serine 1526, serine 1555, and serine 1574 each carry the phosphoserine modification. Over residues 1522–1532 (DEDESGTEESD) the composition is skewed to acidic residues. Basic and acidic residues predominate over residues 1537–1561 (LKDDKDRKAEGKVERVPKSPEHSAE). The segment at 1578-1633 (LDKKDSSDSGVRSSESSPNHSLHNEVADDSQLEKANLIELEDDSHSGKRGIPHSLS) is disordered. Positions 1585–1594 (DSGVRSSESS) are enriched in low complexity. Phosphoserine is present on residues serine 1623 and serine 1633. The residue at position 1679 (threonine 1679) is a Phosphothreonine. Serine 1681 carries the phosphoserine modification. At threonine 1684 the chain carries Phosphothreonine. Polar residues predominate over residues 1713–1731 (LRPSSSPNPTTIQNENLKS). The segment at 1713–1771 (LRPSSSPNPTTIQNENLKSMTHKRSQRSSYTRLSKDPPELHAAASSESTGFGEERESIL) is disordered. Residues 1766–1771 (ERESIL) carry the PDZ-binding motif.

In terms of assembly, found in a complex, at least composed of KIDINS220, MAGI2, NTRK1 and RAPGEF2; the complex is mainly formed at late endosomes in a nerve growth factor (NGF)-dependent manner. Interacts with RAPGEF2; the interaction is strengthened after NGF stimulation. Isoform 2 interacts (via C-terminal domain) with MAGI2 isoform 1 (via PDZ domain). Interacts with NTRK1, NTRK2, NTRK3, ERKL and NGFR. Can form a ternary complex with NGFR and NTRK1 and this complex is affected by the expression levels of KIDINS220/ARMS. An increase in KIDINS220/ARMS expression leads to a decreased association of NGFR and NTRK1. Interacts (via PDZ-binding motif) with SNTA1 and SNTB2 (via PDZ domains). Interacts with EPHA4 and PRKD1. Post-translationally, tyrosine phosphorylated by NTRK1, NTRK2, EPHB2 and EPHA4. Phosphorylation at Ser-918 is induced by phorbol ester treatment. Phosphorylation by NTRK2 is induced by brain-derived neurotrophic factor (BDNF) and neurotrophin-4/5. Phosphorylation by NTRK1 is induced by nerve growth factor (NGF). As to expression, abundant in developing and adult neural tissues as well as neuroendocrine cells and dendritic cells. Overexpressed in melanoma and melanoma cell lines.

The protein resides in the membrane. It localises to the late endosome. Its function is as follows. Promotes a prolonged MAP-kinase signaling by neurotrophins through activation of a Rap1-dependent mechanism. Provides a docking site for the CRKL-C3G complex, resulting in Rap1-dependent sustained ERK activation. May play an important role in regulating postsynaptic signal transduction through the syntrophin-mediated localization of receptor tyrosine kinases such as EPHA4. In cooperation with SNTA1 can enhance EPHA4-induced JAK/STAT activation. Plays a role in nerve growth factor (NGF)-induced recruitment of RAPGEF2 to late endosomes and neurite outgrowth. May play a role in neurotrophin- and ephrin-mediated neuronal outgrowth and in axon guidance during neural development and in neuronal regeneration. Modulates stress-induced apoptosis of melanoma cells via regulation of the MEK/ERK signaling pathway. This Homo sapiens (Human) protein is Kinase D-interacting substrate of 220 kDa (KIDINS220).